We begin with the raw amino-acid sequence, 76 residues long: Acyl carrier protein (76 aa).

The 76-residue stretch at 1-76 folds into the Carrier domain; the sequence is MAIFDDIKEV…DVVRYIETNK (76 aa). O-(pantetheine 4'-phosphoryl)serine is present on Ser36.

Belongs to the acyl carrier protein (ACP) family. In terms of processing, 4'-phosphopantetheine is transferred from CoA to a specific serine of apo-ACP by AcpS. This modification is essential for activity because fatty acids are bound in thioester linkage to the sulfhydryl of the prosthetic group.

The protein localises to the cytoplasm. The protein operates within lipid metabolism; fatty acid biosynthesis. In terms of biological role, carrier of the growing fatty acid chain in fatty acid biosynthesis. The polypeptide is Acyl carrier protein (Wolinella succinogenes (strain ATCC 29543 / DSM 1740 / CCUG 13145 / JCM 31913 / LMG 7466 / NCTC 11488 / FDC 602W) (Vibrio succinogenes)).